The primary structure comprises 137 residues: 3-hydroxyacyl-[acyl-carrier-protein] dehydratase FabZ (137 aa).

Residue histidine 46 is part of the active site.

It belongs to the thioester dehydratase family. FabZ subfamily.

It localises to the cytoplasm. The catalysed reaction is a (3R)-hydroxyacyl-[ACP] = a (2E)-enoyl-[ACP] + H2O. In terms of biological role, involved in unsaturated fatty acids biosynthesis. Catalyzes the dehydration of short chain beta-hydroxyacyl-ACPs and long chain saturated and unsaturated beta-hydroxyacyl-ACPs. In Thermotoga maritima (strain ATCC 43589 / DSM 3109 / JCM 10099 / NBRC 100826 / MSB8), this protein is 3-hydroxyacyl-[acyl-carrier-protein] dehydratase FabZ.